A 357-amino-acid polypeptide reads, in one-letter code: Sulfate/thiosulfate import ATP-binding protein CysA (357 aa).

Residues 3–237 (ITIQNLNKHF…PENAFVTEFL (235 aa)) form the ABC transporter domain. 35–42 (GPSGCGKT) contacts ATP.

This sequence belongs to the ABC transporter superfamily. Sulfate/tungstate importer (TC 3.A.1.6) family. The complex is composed of two ATP-binding proteins (CysA), two transmembrane proteins (CysT and CysW) and a solute-binding protein (CysP).

The protein localises to the cell inner membrane. It catalyses the reaction sulfate(out) + ATP + H2O = sulfate(in) + ADP + phosphate + H(+). It carries out the reaction thiosulfate(out) + ATP + H2O = thiosulfate(in) + ADP + phosphate + H(+). Its function is as follows. Part of the ABC transporter complex CysAWTP involved in sulfate/thiosulfate import. Responsible for energy coupling to the transport system. The polypeptide is Sulfate/thiosulfate import ATP-binding protein CysA (Neisseria meningitidis serogroup A / serotype 4A (strain DSM 15465 / Z2491)).